The chain runs to 123 residues: Large ribosomal subunit protein bL12 (123 aa).

It belongs to the bacterial ribosomal protein bL12 family. As to quaternary structure, homodimer. Part of the ribosomal stalk of the 50S ribosomal subunit. Forms a multimeric L10(L12)X complex, where L10 forms an elongated spine to which 2 to 4 L12 dimers bind in a sequential fashion. Binds GTP-bound translation factors.

Functionally, forms part of the ribosomal stalk which helps the ribosome interact with GTP-bound translation factors. Is thus essential for accurate translation. The sequence is that of Large ribosomal subunit protein bL12 from Laribacter hongkongensis (strain HLHK9).